Here is a 302-residue protein sequence, read N- to C-terminus: MVEPVQEYRLVLVTGPSGAGRTTAINALEDMGYEVIDNLPLSFVPRLIEGPSIGRPIALGLDVRNRDFNATALIELIDRLTQDPRVALEVLYVDCSASELIRRYNQTRRRHPLAPAETPAEGVEREIDLLAPVRVRADHLIDTSEMSPHDLKAELSRWFDRGAATRLAVSVQSFSYKRGVPRGVDMIFDCRFLKNPYWVESLRTLDGREASVADYISSDPRFGPFFEKLRDLVLFLLPAQLEEGKAHLSLGFGCTGGQHRSVAVAELLGNALAEAGWPVSKRHRELERRAAAVLPTHQGEKA.

15 to 22 (GPSGAGRT) is a binding site for ATP. A GTP-binding site is contributed by 62–65 (DVRN).

This sequence belongs to the RapZ-like family.

Functionally, displays ATPase and GTPase activities. This is Nucleotide-binding protein Rsph17029_0317 from Cereibacter sphaeroides (strain ATCC 17029 / ATH 2.4.9) (Rhodobacter sphaeroides).